A 49-amino-acid chain; its full sequence is Large ribosomal subunit protein bL33B (49 aa).

This sequence belongs to the bacterial ribosomal protein bL33 family.

In terms of biological role, plays a role in sporulation at high temperatures. This Bacillus subtilis (strain 168) protein is Large ribosomal subunit protein bL33B (rpmGB).